The primary structure comprises 326 residues: MKHFLRMLIQVCLYFYCKFLWRCMKFVMRKLTGRCELQRICYGTKPGASRTMKIETSLRDSKSKLLQTSVSVHPDAIEKTIDDIMELKKINPDINPQLGISLQACLLQIVGYRNLIADVEKLRREPYDSDNPQHEEMLLKLWELLKPNTPLESRVSKQWCEIGFQGDDPKTDFRGMGLLGLYNLQYFAERDATVAQQVLSDSVHPKCSKFSKIEWEKKKMDKAIGYSFAIVGINITDLAYNLLVSGALKTHFYNIAPEAPTLSHFQQTFCYLMHEFHKFWIEEDPMDIMEFNRVREKFRKRIIKQLQNPDMALCPHFAASEGLINM.

One can recognise an ELMO domain in the interval Q133 to L306.

Acts as a GTPase-activating protein (GAP) toward guanine nucleotide exchange factors like ARL2, ARL3, ARF1 and ARF6, but not for GTPases outside the Arf family. The polypeptide is ELMO domain-containing protein 1 (Elmod1) (Mus musculus (Mouse)).